Here is a 21-residue protein sequence, read N- to C-terminus: Peptide PGLa-R5 (21 aa).

L21 bears the Leucine amide mark.

Expressed by the skin glands.

It is found in the secreted. Functionally, antimicrobial peptide. This Xenopus ruwenzoriensis (Uganda clawed frog) protein is Peptide PGLa-R5.